The following is a 246-amino-acid chain: MGERGVEDKSAVQESATELEAGIGYRFVNRQFLAEALTHRSWVNERRGEEGIRDNERLEFLGDAVLGLLVGKMLFARFPQSREGVLARMKASLVGEETLAALASARGLGRHLLLGRGEERSGGRERRSLLANTYEALLAAVYLDGGLGPVERIVEQDFSPLLAGIASGATGRDFKTEFQEMVQTRFGTAPTYELIATDGPPHDRRFTVIAMVAGKRMGEGAGRSKKEAEQAAARQVLARFAAEGEG.

The region spanning 16–146 (ATELEAGIGY…LLAAVYLDGG (131 aa)) is the RNase III domain. Mg(2+) is bound at residue Glu59. The active site involves Asp63. Mg(2+) contacts are provided by Asn132 and Glu135. Glu135 is a catalytic residue. In terms of domain architecture, DRBM spans 173-242 (DFKTEFQEMV…ARQVLARFAA (70 aa)).

This sequence belongs to the ribonuclease III family. As to quaternary structure, homodimer. Mg(2+) is required as a cofactor.

The protein localises to the cytoplasm. It carries out the reaction Endonucleolytic cleavage to 5'-phosphomonoester.. Functionally, digests double-stranded RNA. Involved in the processing of primary rRNA transcript to yield the immediate precursors to the large and small rRNAs (23S and 16S). Processes some mRNAs, and tRNAs when they are encoded in the rRNA operon. Processes pre-crRNA and tracrRNA of type II CRISPR loci if present in the organism. The polypeptide is Ribonuclease 3 (Geobacter metallireducens (strain ATCC 53774 / DSM 7210 / GS-15)).